The sequence spans 166 residues: Mitochondrial fission process protein 1 (166 aa).

Transmembrane regions (helical) follow at residues 33–53, 78–98, and 125–145; these read SLVK…YVAA, AIAA…IPGF, and TVTC…DSFV.

The protein belongs to the MTFP1 family.

The protein resides in the mitochondrion inner membrane. Its function is as follows. Involved in the mitochondrial division probably by regulating membrane fission. Loss-of-function leads to apoptosis. This chain is Mitochondrial fission process protein 1 (mtp-18), found in Caenorhabditis elegans.